Consider the following 133-residue polypeptide: Ribosome-binding factor A (133 aa).

Belongs to the RbfA family. Monomer. Binds 30S ribosomal subunits, but not 50S ribosomal subunits or 70S ribosomes.

It localises to the cytoplasm. One of several proteins that assist in the late maturation steps of the functional core of the 30S ribosomal subunit. Associates with free 30S ribosomal subunits (but not with 30S subunits that are part of 70S ribosomes or polysomes). Required for efficient processing of 16S rRNA. May interact with the 5'-terminal helix region of 16S rRNA. The sequence is that of Ribosome-binding factor A from Salmonella schwarzengrund (strain CVM19633).